Reading from the N-terminus, the 570-residue chain is Protein misato homolog 1 (570 aa).

Residue Ser495 is modified to Phosphoserine.

It belongs to the misato family. As to expression, present in all cell lines tested (at protein level). Widely expressed.

The protein resides in the mitochondrion outer membrane. Its subcellular location is the cytoplasm. Functionally, involved in the regulation of mitochondrial distribution and morphology. Required for mitochondrial fusion and mitochondrial network formation. The sequence is that of Protein misato homolog 1 (MSTO1) from Homo sapiens (Human).